A 100-amino-acid chain; its full sequence is Large ribosomal subunit protein uL23 (100 aa).

It belongs to the universal ribosomal protein uL23 family. In terms of assembly, part of the 50S ribosomal subunit. Contacts protein L29, and trigger factor when it is bound to the ribosome.

Its function is as follows. One of the early assembly proteins it binds 23S rRNA. One of the proteins that surrounds the polypeptide exit tunnel on the outside of the ribosome. Forms the main docking site for trigger factor binding to the ribosome. This is Large ribosomal subunit protein uL23 from Prochlorococcus marinus (strain MIT 9301).